The sequence spans 277 residues: MSRVRISLIYLYTLVVITTTKTIEYTACNDTIIIPCTIDNPTKYIRWKLDNHDILTYNKTSKTTILSKWHTSARLHSLSDSDVSLIIEYKDILPGTYTCEDNTGIKSTVKLVQLHTNWFNDYQTMLMFIFTGITLFLLFLEITYTSISVVFSTNLGILQVFGCVIAMIELCGAFLFYPSMFTLRHIIGLLMMTLPSIFLIITKVFSFWLLCKLSCAVHLIIYYQLAGYILTVLGLGLSLKECVDGTLLLSGLGTIMVSEHFSLLFLVCFPSTQRDYY.

Residues N29 and N58 are each glycosylated (N-linked (GlcNAc...) asparagine; by host). The next 5 helical transmembrane spans lie at 124-144 (TMLM…EITY), 156-176 (GILQ…AFLF), 186-206 (IIGL…KVFS), 219-239 (LIIY…GLSL), and 247-267 (LLLS…LFLV).

It belongs to the orthopoxvirus OPG166 protein family.

It localises to the host membrane. Functionally, promotes, when overexpressed, the influx of extracellular Ca(2+), leading to membrane permeability and host cell necrosis. This is Protein OPG166 (OPG166) from Vaccinia virus (strain Copenhagen) (VACV).